Here is a 113-residue protein sequence, read N- to C-terminus: Single-stranded DNA-binding protein B (113 aa).

Residues 1–104 (MFNQVMLVGR…VLADTVRFMD (104 aa)) form the SSB domain. Phosphotyrosine is present on Tyr-82.

Homotetramer. Post-translationally, phosphorylated by YwqD, which increases ssDNA affinity; dephosphorylated by YwqE.

The protein localises to the cytoplasm. Its function is as follows. Not essential for replication of the chromosome, but is required for optimal competence. Binds ssDNA, binding is facilitated by DprA, acts as an accessory factor for homologous DNA strand exchange. In Bacillus subtilis (strain 168), this protein is Single-stranded DNA-binding protein B (ssbB).